The chain runs to 391 residues: cAMP-dependent protein kinase regulatory subunit (391 aa).

The tract at residues 1–84 (MFKSPFGANA…PPNPESYPAQ (84 aa)) is disordered. Residues 1 to 131 (MFKSPFGANA…RLKTAIAGNF (131 aa)) are dimerization and phosphorylation. The segment covering 38 to 55 (TVTSPTSPNFGMNAQSMF) has biased composition (polar residues). S92 is subject to Phosphoserine. Residues 132-261 (LFSH…FLRE), E210, R219, 264-381 (LLQT…DIKT), E331, and R340 contribute to the 3',5'-cyclic AMP site.

The protein belongs to the cAMP-dependent kinase regulatory chain family. As to quaternary structure, tetramer, composed of 2 regulatory (R) and 2 catalytic (C) subunits. In the presence of cAMP it dissociates into 2 active monomeric C subunits and an R dimer.

The sequence is that of cAMP-dependent protein kinase regulatory subunit (PKAR) from Colletotrichum orbiculare (strain 104-T / ATCC 96160 / CBS 514.97 / LARS 414 / MAFF 240422) (Cucumber anthracnose fungus).